An 88-amino-acid chain; its full sequence is HssA/B-like protein 6 (88 aa).

Residues 1–22 are disordered; that stretch reads MSILSALTSISNPMKSSNSNVA.

This sequence belongs to the hssA/B family.

The chain is HssA/B-like protein 6 (hssl6) from Dictyostelium discoideum (Social amoeba).